Consider the following 776-residue polypeptide: GATOR2 complex protein Wdr24 (776 aa).

WD repeat units follow at residues 63–103 (NLSY…RQKQ), 109–149 (EHER…SINT), 152–192 (CNSE…KCMV), 196–235 (AHYG…GLEH), 238–280 (HTIA…IPFA), and 284–326 (EHTN…ALKA). Residues 466-490 (HRSSFSNQKNPMNSRRATQVASDWP) form a disordered region. Residues 469–490 (SFSNQKNPMNSRRATQVASDWP) show a composition bias toward polar residues. The C4-type zinc finger occupies 703–726 (NCGECGRPMGGKVGWYCDKCKSMQ). Zn(2+)-binding residues include C704, C707, C719, C722, C730, C733, C744, C747, H749, H752, H755, C766, C769, H771, and C773. The RING-type; atypical zinc finger occupies 728–776 (AKCCVCGLIVRGVYAWCQGCSHGGHIEHLQKYFAKHSKCPKCGHLCAYS).

Belongs to the WD repeat WDR24 family. In terms of assembly, component of the GATOR complex consisting of mio, Nup44A/Seh1, Im11, Nplr3, Nplr2, Wdr24, Wdr59 and Sec13. Within the GATOR complex, probable component of the GATOR2 subcomplex which is likely composed of mio, Nup44A/Seh1, Wdr24, Wdr59 and Sec13. Interacts with Nup44A/Seh1. Interacts with mio. Interacts with Nplr3. The GATOR2 complex associates with unmet in the absence of S-adenosyl-L-methionine; the mio-Wdr24-Nup44A subcomplex is essential and sufficient for this interaction while Wdr59 and Sec13 are dispensable. This association acts as a nutrient sensor to inhibit mTORC1 signaling in the absence of methionine.

Its subcellular location is the lysosome. It is found in the cytoplasmic vesicle. It localises to the autophagosome. It catalyses the reaction S-ubiquitinyl-[E2 ubiquitin-conjugating enzyme]-L-cysteine + [acceptor protein]-L-lysine = [E2 ubiquitin-conjugating enzyme]-L-cysteine + N(6)-ubiquitinyl-[acceptor protein]-L-lysine.. The protein operates within protein modification; protein ubiquitination. In terms of biological role, an essential component of the GATOR subcomplex GATOR2 which functions as an activator of the amino acid-sensing branch of the mTORC1 signaling pathway. The two GATOR subcomplexes, GATOR1 and GATOR2, regulate the mTORC1 pathway in order to mediate metabolic homeostasis, female gametogenesis and the response to amino acid limitation and complete starvation. GATOR2 activates the mTORC1 signaling pathway through the inhibition of the GATOR1 subcomplex, controlling the switch to cell proliferation and growth under nutrient replete conditions and during female oocyte development. GATOR2 probably acts as an E3 ubiquitin-protein ligase toward GATOR1. In the presence of abundant amino acids, the GATOR2 complex mediates ubiquitination of components of the GATOR1 complex, leading to GATOR1 inactivation. This GATOR2 component is required for activating mTORC1 and promoting cell growth in both germline and somatic cells. In addition to its role in regulation of the mTORC1 complex, functions independently of mTORC1 to promote the acidification of lysosomes and facilitates autophagic flux. The protein is GATOR2 complex protein Wdr24 of Drosophila melanogaster (Fruit fly).